The following is a 783-amino-acid chain: uncharacterized protein (783 aa).

A DNA-binding region (zn(2)-C6 fungal-type) is located at residues 40–66 (CFNCKARKVRCDGANPCKACASNNLEC).

Its subcellular location is the cytoplasm. It localises to the nucleus. This is an uncharacterized protein from Schizosaccharomyces pombe (strain 972 / ATCC 24843) (Fission yeast).